Reading from the N-terminus, the 414-residue chain is Transforming growth factor beta-2 proprotein (414 aa).

The N-terminal stretch at 1 to 20 (MHYCVLSTFLLLHLVPVALS) is a signal peptide. N-linked (GlcNAc...) asparagine glycans are attached at residues Asn-72, Asn-140, and Asn-241. 4 disulfide bridges follow: Cys-309-Cys-318, Cys-317-Cys-380, Cys-346-Cys-411, and Cys-350-Cys-413.

It belongs to the TGF-beta family. As to quaternary structure, interacts with the serine proteases, HTRA1 and HTRA3. Interacts with ASPN. Interacts with MFAP5. In terms of assembly, interacts with Transforming growth factor beta-2 (TGF-beta-2) chain; interaction is non-covalent and maintains (TGF-beta-2) in a latent state. Interacts with LRRC32/GARP; leading to regulate activation of TGF-beta-2. Interacts with NREP; the interaction results in a decrease in TGFB2 autoinduction. Transforming growth factor beta-2: Homodimer; disulfide-linked. Transforming growth factor beta-2: Interacts with TGF-beta receptors (TGFBR1 and TGFBR2), leading to signal transduction. Post-translationally, the precursor proprotein is cleaved in the Golgi apparatus to form Transforming growth factor beta-2 (TGF-beta-2) and Latency-associated peptide (LAP) chains, which remain non-covalently linked, rendering TGF-beta-2 inactive.

Its subcellular location is the secreted. The protein resides in the extracellular space. It is found in the extracellular matrix. Precursor of the Latency-associated peptide (LAP) and Transforming growth factor beta-2 (TGF-beta-2) chains, which constitute the regulatory and active subunit of TGF-beta-2, respectively. Its function is as follows. Required to maintain the Transforming growth factor beta-2 (TGF-beta-2) chain in a latent state during storage in extracellular matrix. Associates non-covalently with TGF-beta-2 and regulates its activation via interaction with 'milieu molecules', such as LTBP1 and LRRC32/GARP, that control activation of TGF-beta-2. In terms of biological role, multifunctional protein that regulates various processes such as angiogenesis and heart development. Activation into mature form follows different steps: following cleavage of the proprotein in the Golgi apparatus, Latency-associated peptide (LAP) and Transforming growth factor beta-2 (TGF-beta-2) chains remain non-covalently linked rendering TGF-beta-2 inactive during storage in extracellular matrix. At the same time, LAP chain interacts with 'milieu molecules', such as LTBP1 and LRRC32/GARP, that control activation of TGF-beta-2 and maintain it in a latent state during storage in extracellular milieus. Once activated following release of LAP, TGF-beta-2 acts by binding to TGF-beta receptors (TGFBR1 and TGFBR2), which transduce signal. In Mus musculus (Mouse), this protein is Transforming growth factor beta-2 proprotein (Tgfb2).